The primary structure comprises 597 residues: Peptidyl-prolyl cis-trans isomerase-like 2 (597 aa).

The region spanning 41-114 (KKLPFNFCAA…TTDSDENKGD (74 aa)) is the U-box domain. Positions 328–483 (NKGYVRMETN…NKIVIKDMII (156 aa)) constitute a PPIase cyclophilin-type domain. The segment covering 495–519 (KKQKEGEEERKREVARQGGTEDDRT) has biased composition (basic and acidic residues). 2 disordered regions span residues 495 to 521 (KKQKEGEEERKREVARQGGTEDDRTTW) and 560 to 597 (ATTTTTTTRKAEEEEVDTWEEPVRKKAKMGGFGNFDGW).

This sequence belongs to the cyclophilin-type PPIase family. PPIL2 subfamily.

The protein localises to the nucleus. It catalyses the reaction [protein]-peptidylproline (omega=180) = [protein]-peptidylproline (omega=0). It carries out the reaction S-ubiquitinyl-[E2 ubiquitin-conjugating enzyme]-L-cysteine + [acceptor protein]-L-lysine = [E2 ubiquitin-conjugating enzyme]-L-cysteine + N(6)-ubiquitinyl-[acceptor protein]-L-lysine.. The protein operates within protein modification; protein ubiquitination. May catalyze the cis-trans isomerization of proline imidic peptide bonds in oligopeptides thereby assisting the folding of proteins. May also function as a chaperone, playing a role in intracellular transport of proteins. May also have a protein ubiquitin ligase activity acting as an E3 ubiquitin protein ligase or as a ubiquitin-ubiquitin ligase promoting elongation of ubiquitin chains on proteins. The sequence is that of Peptidyl-prolyl cis-trans isomerase-like 2 (ppi-2) from Neurospora crassa (strain ATCC 24698 / 74-OR23-1A / CBS 708.71 / DSM 1257 / FGSC 987).